The following is a 1877-amino-acid chain: Transmembrane protein 131 (1877 aa).

A signal peptide spans 1-20; it reads MGKRAGGAAAAAAAASTSSA. Residues 21 to 1115 lie on the Lumenal side of the membrane; the sequence is AGLEPAAGRG…AEALPRPNWE (1095 aa). A papD-L domain region spans residues 107-281; sequence RFEPPMLDFH…ETKGVMRASF (175 aa). The helical transmembrane segment at 1116–1136 threads the bilayer; sequence LALYIIISGVMSALFLLVIGT. Topologically, residues 1137–1877 are cytoplasmic; the sequence is AYLEAQGIWE…WSNSHFPHEN (741 aa). The segment covering 1197–1227 has biased composition (polar residues); sequence NASSRPGTGSHRQCGTSVHPHSSHGSKNSAD. 4 disordered regions span residues 1197-1573, 1590-1655, 1679-1707, and 1830-1852; these read NASS…SSST, LKQR…NPTF, SDFS…SPVS, and NSAA…TYNP. The span at 1233–1258 shows a compositional bias: low complexity; that stretch reads TRNSSSMSSRTSPQAAASQSTSKTSP. Residues 1301–1311 are compositionally biased toward pro residues; that stretch reads QPPPPVPQHQE. 2 positions are modified to phosphoserine: Ser1318 and Ser1338. Basic and acidic residues-rich tracts occupy residues 1326–1339 and 1349–1360; these read SHPE…HSSE and AMDKDFDHHDSS. Ser1371 carries the phosphoserine modification. Basic residues predominate over residues 1376-1391; it reads SKGKGKSLQQRKAKPP. Residues 1392–1414 are compositionally biased toward basic and acidic residues; it reads KKQEEKEKRGKGKPQEDELKDAL. Low complexity predominate over residues 1420–1432; the sequence is SSTTTETSNPDTE. Polar residues-rich tracts occupy residues 1507 to 1523 and 1538 to 1550; these read TLAS…TKGT and LPSS…TSSS. Residues 1599–1608 are compositionally biased toward pro residues; the sequence is PASPSLPTAP. The segment covering 1609–1646 has biased composition (low complexity); that stretch reads CPFTSRGSYSSVVNSSGSDTKAKQTSSSKSKLTKAASL. Positions 1830 to 1839 are enriched in polar residues; the sequence is NSAAAHTPSA. Residues Ser1857 and Ser1865 each carry the phosphoserine modification.

The protein belongs to the TMEM131 family. Interacts (via PapD-L domain) with COL1A2 (via C-terminus); the interaction is direct, may occur with other collagen proteins, and is involved in assembly and TRAPPIII ER-to-Golgi transport complex-dependent secretion of collagen. Interacts (via C-terminus) with TRAPPC8 (via C-terminus); the interaction is direct.

It is found in the membrane. Its function is as follows. Collagen binding transmembrane protein involved in collagen secretion by recruiting the ER-to-Golgi transport complex TRAPPIII. May play a role in the immune response to viral infection. This Mus musculus (Mouse) protein is Transmembrane protein 131.